A 232-amino-acid chain; its full sequence is RNA chaperone ProQ (232 aa).

A disordered region spans residues 105–182; sequence EAKARVQAQR…REEQHTPVSD (78 aa). Residues 117–136 are compositionally biased toward basic and acidic residues; that stretch reads QQAKKREAAAAAGEKEDAPR. Over residues 137–146 the composition is skewed to basic residues; the sequence is RERKPRPTTP. A compositionally biased stretch (basic and acidic residues) spans 147 to 177; the sequence is RRKEGAERKPRAQKSVEKAPKTVKAPREEQH.

Belongs to the ProQ family.

Its subcellular location is the cytoplasm. In terms of biological role, RNA chaperone with significant RNA binding, RNA strand exchange and RNA duplexing activities. May regulate ProP activity through an RNA-based, post-transcriptional mechanism. The sequence is that of RNA chaperone ProQ from Escherichia coli O7:K1 (strain IAI39 / ExPEC).